We begin with the raw amino-acid sequence, 277 residues long: MDNVVDRHVFYISDGTAITAEVLGHAVMSQFPVTISSITLPFVENESRARAVKDQIDAIYQQTGVRPLVFYSIVLPEIRAIILQSEGFCQDIVQALVAPLQQEMKLDPTPIAHRTHGLNPGNLNKYDARIAAIDYTLAHDDGISLRNLDQAQVILLGVSRCGKTPTSLYLAMQFGIRAANYPFIADDMDNLTLPTSLKPLQHKLFGLTIDPERLAAIREERRENSRYASLRQCRMEVAEVEALYRKNQIPCLNSTNYSVEEIATKILDIMGLNRRMY.

157–164 is an ADP binding site; the sequence is GVSRCGKT.

This sequence belongs to the pyruvate, phosphate/water dikinase regulatory protein family. PSRP subfamily.

The catalysed reaction is [pyruvate, water dikinase] + ADP = [pyruvate, water dikinase]-phosphate + AMP + H(+). It catalyses the reaction [pyruvate, water dikinase]-phosphate + phosphate + H(+) = [pyruvate, water dikinase] + diphosphate. Its function is as follows. Bifunctional serine/threonine kinase and phosphorylase involved in the regulation of the phosphoenolpyruvate synthase (PEPS) by catalyzing its phosphorylation/dephosphorylation. The protein is Phosphoenolpyruvate synthase regulatory protein of Salmonella agona (strain SL483).